A 136-amino-acid polypeptide reads, in one-letter code: MKKSNFSNVNLSMGTGRRKSSVARVYIREGSGNIKVNNRDFDSYIQLENLRTMALSPLVLTNTLGKYDLYINVYGGGISGQSGAIRHGISRALFELDESNKMILRSNGFLTRDSRKVERKKFGQKKARKSFQFSKR.

This sequence belongs to the universal ribosomal protein uS9 family.

The polypeptide is Small ribosomal subunit protein uS9 (Borreliella afzelii (strain PKo) (Borrelia afzelii)).